Reading from the N-terminus, the 651-residue chain is Translation initiation factor eIF2B subunit delta (651 aa).

Positions M1 to L108 are disordered. At S2 the chain carries N-acetylserine. Over residues A11–A28 the composition is skewed to low complexity. Composition is skewed to basic and acidic residues over residues G30 to A49 and K76 to Q90. S106 carries the post-translational modification Phosphoserine. T121 carries the phosphothreonine modification. The tract at residues A566 to I600 is disordered. A compositionally biased stretch (basic and acidic residues) spans K580–S590.

Belongs to the eIF-2B alpha/beta/delta subunits family. Component of the translation initiation factor 2B (eIF2B) complex which is a heterodecamer of two sets of five different subunits: alpha, beta, gamma, delta and epsilon. Subunits alpha, beta and delta comprise a regulatory subcomplex and subunits epsilon and gamma comprise a catalytic subcomplex. Within the complex, the hexameric regulatory complex resides at the center, with the two heterodimeric catalytic subcomplexes bound on opposite sides.

The protein resides in the cytoplasm. It is found in the cytosol. Functionally, acts as a component of the translation initiation factor 2B (eIF2B) complex, which catalyzes the exchange of GDP for GTP on the eukaryotic initiation factor 2 (eIF2) complex gamma subunit. Its guanine nucleotide exchange factor activity is repressed when bound to eIF2 complex phosphorylated on the alpha subunit, thereby limiting the amount of methionyl-initiator methionine tRNA available to the ribosome and consequently global translation is repressed. It activates the synthesis of GCN4 in yeast under amino acid starvation conditions by suppressing the inhibitory effects of multiple AUG codons present in the leader of GCN4 mRNA. It may promote either repression or activation of GCN4 expression depending on amino acid availability. GCD2 is also required for cell viability. Its function can partially be replaced by GCN3 under normal growth conditions in GCD2-defective mutants, under AA starvation conditions GCN3 is an antagonist (GCN4 translational activator). This is Translation initiation factor eIF2B subunit delta (GCD2) from Saccharomyces cerevisiae (strain ATCC 204508 / S288c) (Baker's yeast).